A 397-amino-acid chain; its full sequence is Putative nickel insertion protein (397 aa).

The protein belongs to the LarC family.

In Synechococcus sp. (strain JA-2-3B'a(2-13)) (Cyanobacteria bacterium Yellowstone B-Prime), this protein is Putative nickel insertion protein.